The chain runs to 469 residues: Glutamate--tRNA ligase (469 aa).

Residues 9-19 (PSPTGFLHVGG) carry the 'HIGH' region motif. Residues cysteine 98, cysteine 100, cysteine 125, and aspartate 127 each coordinate Zn(2+). Positions 236-240 (KLSKR) match the 'KMSKS' region motif. Lysine 239 provides a ligand contact to ATP.

Belongs to the class-I aminoacyl-tRNA synthetase family. Glutamate--tRNA ligase type 1 subfamily. In terms of assembly, monomer. Requires Zn(2+) as cofactor.

Its subcellular location is the cytoplasm. It carries out the reaction tRNA(Glu) + L-glutamate + ATP = L-glutamyl-tRNA(Glu) + AMP + diphosphate. In terms of biological role, catalyzes the attachment of glutamate to tRNA(Glu) in a two-step reaction: glutamate is first activated by ATP to form Glu-AMP and then transferred to the acceptor end of tRNA(Glu). The protein is Glutamate--tRNA ligase of Shewanella halifaxensis (strain HAW-EB4).